The chain runs to 407 residues: Myeloid cell nuclear differentiation antigen (407 aa).

Residues 1–88 (MVNEYKKILL…VNNLRKEKSK (88 aa)) enclose the Pyrin domain. The interval 108 to 207 (EVGLAAPAPT…RQVDARRNVP (100 aa)) is disordered. A Nuclear localization signal motif is present at residues 131-137 (PVAQKRK). Residues 139 to 148 (PNKEKTEAKR) show a composition bias toward basic and acidic residues. The segment covering 177 to 190 (QTSSSTPSNTSFTP) has biased composition (low complexity). Positions 196-394 (AQRQVDARRN…CGSHSFIKVI (199 aa)) constitute an HIN-200 domain.

As to quaternary structure, participates in a ternary complex with YY1 and the YY1 target DNA element. Binds nucleolin and nucleophosmin/NPM/B23. As to expression, expressed constitutively in cells of the myeloid lineage. Found in promyelocyte stage cells as well as in all other stage cells including peripheral blood monocytes and granulocytes. Also appears in myeloblast cells in some cases of acute myeloid Leukemia.

It localises to the nucleus. The protein localises to the cytoplasm. Its function is as follows. May act as a transcriptional activator/repressor in the myeloid lineage. Plays a role in the granulocyte/monocyte cell-specific response to interferon. Stimulates the DNA binding of the transcriptional repressor protein YY1. This chain is Myeloid cell nuclear differentiation antigen (MNDA), found in Homo sapiens (Human).